Here is a 459-residue protein sequence, read N- to C-terminus: Sperm-tail PG-rich repeat-containing protein 2 (459 aa).

9 STPGR repeats span residues 21-30 (VGPGSYQVPF), 63-73 (PGPGHYNVSEA), 119-148 (TLGP…NSSG), 157-203 (GPGP…QEKK), 213-243 (TPAP…FGQS), 257-268 (PGPGFYNVLNNT), 351-377 (PAPG…PRSL), 400-410 (GPGPAAYNPVL), and 433-443 (TPGPATYEISQ).

The protein is Sperm-tail PG-rich repeat-containing protein 2 (STPG2) of Homo sapiens (Human).